The sequence spans 195 residues: HTH-type transcriptional regulator BetI (195 aa).

An HTH tetR-type domain is found at 8–68 (SIRRRQLIDA…ATMRDITSQL (61 aa)). Positions 31-50 (TIAQIARRAGVSTGIISHYF) form a DNA-binding region, H-T-H motif.

The protein operates within amine and polyamine biosynthesis; betaine biosynthesis via choline pathway [regulation]. Repressor involved in the biosynthesis of the osmoprotectant glycine betaine. It represses transcription of the choline transporter BetT and the genes of BetAB involved in the synthesis of glycine betaine. The sequence is that of HTH-type transcriptional regulator BetI from Escherichia coli (strain K12 / DH10B).